We begin with the raw amino-acid sequence, 145 residues long: Succinate dehydrogenase assembly factor 2, mitochondrial (145 aa).

This sequence belongs to the SDHAF2 family. As to quaternary structure, interacts with the flavoprotein subunit within the SDH catalytic dimer.

It is found in the mitochondrion matrix. Functionally, plays an essential role in the assembly of succinate dehydrogenase (SDH), an enzyme complex (also referred to as respiratory complex II) that is a component of both the tricarboxylic acid (TCA) cycle and the mitochondrial electron transport chain, and which couples the oxidation of succinate to fumarate with the reduction of ubiquinone (coenzyme Q) to ubiquinol. Required for flavinylation (covalent attachment of FAD) of the flavoprotein subunit of the SDH catalytic dimer. The sequence is that of Succinate dehydrogenase assembly factor 2, mitochondrial from Yarrowia lipolytica (strain CLIB 122 / E 150) (Yeast).